Reading from the N-terminus, the 438-residue chain is UDP-N-acetylmuramoylalanine--D-glutamate ligase (438 aa).

112-118 is a binding site for ATP; that stretch reads GSNGKST.

The protein belongs to the MurCDEF family.

It is found in the cytoplasm. It catalyses the reaction UDP-N-acetyl-alpha-D-muramoyl-L-alanine + D-glutamate + ATP = UDP-N-acetyl-alpha-D-muramoyl-L-alanyl-D-glutamate + ADP + phosphate + H(+). The protein operates within cell wall biogenesis; peptidoglycan biosynthesis. Its function is as follows. Cell wall formation. Catalyzes the addition of glutamate to the nucleotide precursor UDP-N-acetylmuramoyl-L-alanine (UMA). The polypeptide is UDP-N-acetylmuramoylalanine--D-glutamate ligase (Shigella sonnei (strain Ss046)).